The following is a 101-amino-acid chain: Small ribosomal subunit protein bS18c (101 aa).

Belongs to the bacterial ribosomal protein bS18 family. Part of the 30S ribosomal subunit.

Its subcellular location is the plastid. It is found in the chloroplast. In Guizotia abyssinica (Niger), this protein is Small ribosomal subunit protein bS18c.